We begin with the raw amino-acid sequence, 171 residues long: Laminin subunit beta-1 (171 aa).

Residues 1 to 29 (MNGRTQNLWFSTFRLVIVYALFFAKLCFG) form the signal peptide. 5 disulfide bridges follow: Cys-59–Cys-69, Cys-72–Cys-81, Cys-84–Cys-100, Cys-103–Cys-118, and Cys-105–Cys-128. Laminin EGF-like domains follow at residues 66–102 (TGVC…VCQR), 103–160 (CQCP…TCKK), and 161–171 (CLCNGNINSAS). Asn-130 carries an N-linked (GlcNAc...) asparagine glycan. Cystine bridges form between Cys-131-Cys-140 and Cys-143-Cys-158.

Laminin is a complex glycoprotein, consisting of three different polypeptide chains (alpha, beta, gamma), which are bound to each other by disulfide bonds into a cross-shaped molecule comprising one long and three short arms with globules at each end.

The protein resides in the secreted. Its subcellular location is the extracellular space. The protein localises to the extracellular matrix. It localises to the basement membrane. Its function is as follows. Binding to cells via a high affinity receptor, laminin is thought to mediate the attachment, migration and organization of cells into tissues during embryonic development by interacting with other extracellular matrix components. This chain is Laminin subunit beta-1, found in Hydra vulgaris (Hydra).